A 144-amino-acid chain; its full sequence is UPF0102 protein Veis_0630 (144 aa).

The disordered stretch occupies residues 11 to 31 (PPAAAPGPAPAPASAATASER).

It belongs to the UPF0102 family.

In Verminephrobacter eiseniae (strain EF01-2), this protein is UPF0102 protein Veis_0630.